A 233-amino-acid polypeptide reads, in one-letter code: MTELDAQKIIDFIANSKKQTAVKVTYKGHLNGRIPTSIQNFSNSDFGILYGDWSDIKPLLSGLNKKDYLIENNARNSAVPLLNIKDINARIEPGAIIRDQVKIADNAVIMMGAVINIGAEIGEATMIDMGAVLGGRAIVGKHSHIGAGAVLAGVVEPASAQPVRVGDNVLIGANAVIIEGVQIGDGAVVGAGAVVINDVPAHTVVAGVPAKVIKQIDEKTENKTALIDALRSL.

It belongs to the transferase hexapeptide repeat family. DapH subfamily.

It carries out the reaction (S)-2,3,4,5-tetrahydrodipicolinate + acetyl-CoA + H2O = L-2-acetamido-6-oxoheptanedioate + CoA. The protein operates within amino-acid biosynthesis; L-lysine biosynthesis via DAP pathway; LL-2,6-diaminopimelate from (S)-tetrahydrodipicolinate (acetylase route): step 1/3. Catalyzes the transfer of an acetyl group from acetyl-CoA to tetrahydrodipicolinate. This is 2,3,4,5-tetrahydropyridine-2,6-dicarboxylate N-acetyltransferase from Oenococcus oeni (strain ATCC BAA-331 / PSU-1).